Reading from the N-terminus, the 239-residue chain is Fatty acid metabolism regulator protein (239 aa).

Residues 6–74 (QSPAGFAEEY…HGKPTKVNNF (69 aa)) enclose the HTH gntR-type domain. A DNA-binding region (H-T-H motif) is located at residues 34–53 (ERELSELIGVTRTTLREVLQ).

In terms of assembly, homodimer.

It localises to the cytoplasm. Its function is as follows. Multifunctional regulator of fatty acid metabolism. This Yersinia enterocolitica serotype O:8 / biotype 1B (strain NCTC 13174 / 8081) protein is Fatty acid metabolism regulator protein.